We begin with the raw amino-acid sequence, 2273 residues long: Retinal-specific phospholipid-transporting ATPase ABCA4 (2273 aa).

Residues 1–21 are Cytoplasmic-facing; it reads MGFVRQIQLLLWKNWTLRKRQ. A helical membrane pass occupies residues 22-42; the sequence is KIRFVVELVWPLSLFLVLIWL. At 43–646 the chain is on the extracellular side; that stretch reads RNANPLYSHH…MPYPCFVDDS (604 aa). 2 cysteine pairs are disulfide-bonded: C54–C81 and C75–C324. A glycan (N-linked (GlcNAc...) asparagine) is linked at N98. Residues S336 and N338 each contribute to the Mg(2+) site. A disulfide bridge links C370 with C519. N415, N444, and N504 each carry an N-linked (GlcNAc...) asparagine glycan. An N-all-trans-retinylidenephosphatidylethanolamine is bound by residues R587 and R653. 3 cysteine pairs are disulfide-bonded: C641/C1490, C1444/C1455, and C1488/C1502. Residues 647–667 traverse the membrane as a helical segment; that stretch reads FMIILNRCFPIFMVLAWIYSV. The Cytoplasmic portion of the chain corresponds to 668–699; the sequence is SMTVKSIVLEKELRLKETLKNQGVSNAVIWCT. Residues 700–720 form a helical membrane-spanning segment; it reads WFLDSFSIMSMSIFLLTIFIM. Residues 721–730 are Extracellular-facing; the sequence is HGRILHYSDP. The helical transmembrane segment at 731-751 threads the bilayer; the sequence is FILFLFLLAFSTATIMLCFLL. Residues 752–759 are Cytoplasmic-facing; that stretch reads STFFSKAS. Residues 760–780 traverse the membrane as a helical segment; that stretch reads LAAACSGVIYFTLYLPHILCF. At 781–835 the chain is on the extracellular side; sequence AWQDRMTAELKKAVSLLSPVAFGFGTEYLVRFEEQGLGLQWSNIGNSPTEGDEFS. Residues 836–856 form a helical membrane-spanning segment; the sequence is FLLSMQMMLLDAAVYGLLAWY. Residues 857–1376 are Cytoplasmic-facing; sequence LDQVFPGDYG…IRSHKDFLAQ (520 aa). The disordered stretch occupies residues 891–911; sequence ERALEKTEPLTEETEDPEHPE. T901 is modified (phosphothreonine). Residues 929–1160 enclose the ABC transporter 1 domain; the sequence is VCVKNLVKIF…FGTGLYLTLV (232 aa). ATP contacts are provided by F938, G966, and K969. T970 contacts Mg(2+). T971, Q1010, K1054, G1064, G1065, and H1118 together coordinate ATP. Position 1185 is a phosphoserine (S1185). The tract at residues 1284–1345 is disordered; that stretch reads PLFAGGAQQK…EPECPGPQLN (62 aa). T1313 is subject to Phosphothreonine. S1317 carries the post-translational modification Phosphoserine. Over residues 1331–1340 the composition is skewed to pro residues; that stretch reads GQPPPEPECP. Residues 1377–1397 traverse the membrane as a helical segment; sequence IVLPATFVFLALMLSIVIPPF. Topologically, residues 1398–1727 are extracellular; that stretch reads GEYPALTLHP…VSPTTYWVTN (330 aa). N1469 is a glycosylation site (N-linked (GlcNAc...) asparagine). Residues N1529, N1588, and N1662 are each glycosylated (N-linked (GlcNAc...) asparagine). Residues 1728-1748 traverse the membrane as a helical segment; it reads FLWDIMNYSVSAGLVVGIFIG. Over 1749–1759 the chain is Cytoplasmic; that stretch reads FQKKAYTSPEN. A helical membrane pass occupies residues 1760–1780; the sequence is LPALVALLLLYGWAVIPMMYP. Topologically, residues 1781-1792 are extracellular; sequence ASFLFDVPSTAY. A helical transmembrane segment spans residues 1793 to 1813; that stretch reads VALSCANLFIGINSSAITFIL. At 1814–1831 the chain is on the cytoplasmic side; sequence ELFENNRTLLRFNAVLRK. A helical transmembrane segment spans residues 1832-1852; the sequence is LLIVFPHFCLGRGLIDLALSQ. At 1853–1873 the chain is on the extracellular side; it reads AVTDVYARFGEEHSANPFHWD. A helical membrane pass occupies residues 1874 to 1894; sequence LIGKNLFAMVVEGVVYFLLTL. Residues 1895–2273 lie on the Cytoplasmic side of the membrane; the sequence is LVQRHFFLSQ…AAGASRQAQD (379 aa). An ABC transporter 2 domain is found at 1938 to 2170; the sequence is LRLHELTKIY…FGDGYIVTMK (233 aa). ATP is bound by residues N1974, G1975, K1978, T1979, T1980, and G2073. T1979 lines the Mg(2+) pocket. Residues 2244 to 2249 are essential for ATP binding and ATPase activity; the sequence is VFVNFA.

The protein belongs to the ABC transporter superfamily. ABCA family. In terms of processing, proteolytic cleavage by trypsin leads to a 120-kDa N-terminal fragment and a 115-kDa C-terminal fragment that are linked through disulfide bonds. Post-translationally, N-glycosylated. Phosphorylation is independent of light exposure and modulates ATPase activity. Retinal-specific. Seems to be exclusively found in the rims of rod photoreceptor cells.

The protein resides in the membrane. Its subcellular location is the endoplasmic reticulum. It localises to the cytoplasmic vesicle. The protein localises to the cell projection. It is found in the cilium. The protein resides in the photoreceptor outer segment. It carries out the reaction an N-all-trans-retinylidenephosphatidylethanolamine(out) + ATP + H2O = an N-all-trans-retinylidenephosphatidylethanolamine(in) + ADP + phosphate + H(+). It catalyses the reaction ATP + H2O + phospholipidSide 1 = ADP + phosphate + phospholipidSide 2.. The catalysed reaction is a 1,2-diacyl-sn-glycero-3-phosphoethanolamine(out) + ATP + H2O = a 1,2-diacyl-sn-glycero-3-phosphoethanolamine(in) + ADP + phosphate + H(+). The enzyme catalyses N-11-cis-retinylidenephosphatidylethanolamine(out) + ATP + H2O = N-11-cis-retinylidenephosphatidylethanolamine(in) + ADP + phosphate + H(+). It carries out the reaction ATP + H2O = ADP + phosphate + H(+). With respect to regulation, ATPase activity is decreased by cholesterol and ceramide. Phospholipids translocase activity is highly reduced by berylium fluoride and aluminum floride. N-ethylmaleimide inhibits phospholipid translocase activity. In terms of biological role, flippase that catalyzes in an ATP-dependent manner the transport of retinal-phosphatidylethanolamine conjugates like 11-cis and all-trans isomers of N-retinylidene-phosphatidylethanolamine (N-Ret-PE) from the lumen to the cytoplasmic leaflet of photoreceptor outer segment disk membranes, where 11-cis-retinylidene-phosphatidylethanolamine is then isomerized to its all-trans isomer and reduced by RDH8 to produce all-trans-retinol. This transport activity ensures that all-trans-retinal generated from photoexcitation and 11-cis-retinal not needed for the regeneration of rhodopsin and cone opsins are effectively cleared from the photoreceptors, therefore preventing their accumulation and the formation of toxic bisretinoid. Displays ATPase activity in vitro in absence of retinal substrate. May display GTPase activity that is strongly influenced by the lipid environment and the presence of retinoid compounds. Binds the unprotonated form of N-retinylidene-phosphatidylethanolamine with high affinity in the absence of ATP, and ATP binding and hydrolysis induce a protein conformational change that causes N-retinylidene-phosphatidylethanolamine release. This is Retinal-specific phospholipid-transporting ATPase ABCA4 from Homo sapiens (Human).